The primary structure comprises 256 residues: Inositol-1-monophosphatase (256 aa).

The Mg(2+) site is built by E60, D77, L79, and D80. A substrate-binding site is contributed by E60. Residues 79–82 (LDGT), R178, and D207 contribute to the substrate site. D207 serves as a coordination point for Mg(2+).

Belongs to the inositol monophosphatase superfamily. Requires Mg(2+) as cofactor.

The catalysed reaction is a myo-inositol phosphate + H2O = myo-inositol + phosphate. The polypeptide is Inositol-1-monophosphatase (suhB) (Caulobacter vibrioides (strain ATCC 19089 / CIP 103742 / CB 15) (Caulobacter crescentus)).